We begin with the raw amino-acid sequence, 201 residues long: Small ribosomal subunit protein uS4c (201 aa).

One can recognise an S4 RNA-binding domain in the interval 89 to 152 (MRLDNILFRL…NSRTLVQNLI (64 aa)).

This sequence belongs to the universal ribosomal protein uS4 family. Part of the 30S ribosomal subunit. Contacts protein S5. The interaction surface between S4 and S5 is involved in control of translational fidelity.

The protein resides in the plastid. It localises to the chloroplast. Functionally, one of the primary rRNA binding proteins, it binds directly to 16S rRNA where it nucleates assembly of the body of the 30S subunit. In terms of biological role, with S5 and S12 plays an important role in translational accuracy. The sequence is that of Small ribosomal subunit protein uS4c (rps4) from Crucihimalaya wallichii (Rock-cress).